Reading from the N-terminus, the 254-residue chain is 3-deoxy-manno-octulosonate cytidylyltransferase (254 aa).

It belongs to the KdsB family.

The protein localises to the cytoplasm. The catalysed reaction is 3-deoxy-alpha-D-manno-oct-2-ulosonate + CTP = CMP-3-deoxy-beta-D-manno-octulosonate + diphosphate. The protein operates within nucleotide-sugar biosynthesis; CMP-3-deoxy-D-manno-octulosonate biosynthesis; CMP-3-deoxy-D-manno-octulosonate from 3-deoxy-D-manno-octulosonate and CTP: step 1/1. It functions in the pathway bacterial outer membrane biogenesis; lipopolysaccharide biosynthesis. Activates KDO (a required 8-carbon sugar) for incorporation into bacterial lipopolysaccharide in Gram-negative bacteria. This Chlamydia pneumoniae (Chlamydophila pneumoniae) protein is 3-deoxy-manno-octulosonate cytidylyltransferase.